Here is a 505-residue protein sequence, read N- to C-terminus: Lysine--tRNA ligase (505 aa).

Mg(2+) contacts are provided by Glu415 and Glu422.

The protein belongs to the class-II aminoacyl-tRNA synthetase family. As to quaternary structure, homodimer. Mg(2+) is required as a cofactor.

The protein localises to the cytoplasm. The catalysed reaction is tRNA(Lys) + L-lysine + ATP = L-lysyl-tRNA(Lys) + AMP + diphosphate. This Shigella flexneri protein is Lysine--tRNA ligase.